We begin with the raw amino-acid sequence, 432 residues long: MKKFLITLLLGVFMGLQASALTHQEINQAKVPVIYEENHLLPMGFIHLAFRGGGSLSDKNQLGLAKLFAQVLNEGTKELGAVGFAQLLEQKAISLNVDTSTEDLQITLEFLKEYEDEAITRLKELLKSPNFTQNALEKVKTQMLAALLQKESDFDYLAKLTLKQELFANTPLANAALGTKESIQKIKLDDLKQQFAKVFELNKLVVVLGGDLKIDQTLKRLNNALNFLPQGKAYEEPYFETSDKKSEKVLYKDTEQAFVYFGAPFKIKDLKQDLAKSKVMMFVLGGGFGSRLMEKIRVQEGLAYSVYIRSNFSKVAHFASGYLQTKLSTQTKSVALVKKIVKEFIEKGMTQQELDDAKKFLLGSEPLRNETISSRLNTTYNYFYLGLPLNFNQTLLNQIQKMSLKEINDFIKAHTEINDLTFAIVSNKKKDK.

The N-terminal stretch at 1–20 is a signal peptide; the sequence is MKKFLITLLLGVFMGLQASA.

Belongs to the peptidase M16 family.

The protein resides in the secreted. Functionally, may contribute to the full activity of the protease PqqE. The polypeptide is Non-peptidase homolog YmxG (Helicobacter pylori (strain ATCC 700392 / 26695) (Campylobacter pylori)).